The following is a 765-amino-acid chain: LPS-assembly protein LptD (765 aa).

A signal peptide spans 1 to 18 (MQIRYFLALSLLPQLVLA).

This sequence belongs to the LptD family. As to quaternary structure, component of the lipopolysaccharide transport and assembly complex. Interacts with LptE and LptA.

Its subcellular location is the cell outer membrane. Its function is as follows. Together with LptE, is involved in the assembly of lipopolysaccharide (LPS) at the surface of the outer membrane. The sequence is that of LPS-assembly protein LptD from Shewanella sp. (strain MR-4).